The chain runs to 239 residues: IkB-like protein (239 aa).

ANK repeat units lie at residues 48-80, 87-118, 124-153, and 158-187; these read SKIT…EIIS, DGNS…GIKV, NGIT…NPNQ, and KGFN…KPLF. Positions 81–87 match the Nuclear localization signal motif; it reads HYRRDKD. The Nuclear localization signal motif lies at 203–214; the sequence is KKKPKIIITSCE. A PxIxITxC motif; Interaction with host PPP3CA motif is present at residues 206-213; sequence PKIIITSC. The FLCV motif signature appears at 228 to 231; it reads FLCV.

Belongs to the asfivirus A238L family. Interacts with host PPIA. Interacts with host PPP3CA/Calcineurin. Interacts with host RELA/p65; interaction of the 32 kDa form with host RELA results in the formation of a stable complex with NF-kappa-B. Interacts with host PPP3R1. Interacts with host EP300; this interaction inhibits the association of host EP300 with host RELA, JUN and NFATC2. The protein exists in a 28 kDa and a 32 kDa form, probably due to post-translational modifications which are neither phosphorylation, nor sumoylation.

Its subcellular location is the host nucleus. It localises to the host cytoplasm. In terms of biological role, ikB-like protein that inhibits the binding of NF-kappa-B to DNA, thereby downregulating pro-inflammatory cytokine production. Forms a heterodimer with the NF-kappa-B subunit RELA/p65 and prevents the activation of the NF-kappa-B transcription factor. Inhibits calcineurin function, which is required for the induction of nuclear factor of activated T cells (NFAT)-dependent immune response genes. Prevents the binding of substrates to calcineurin without affecting the phosphatase activity. Does not contain the serine residues that are phosphorylated by host IkB kinase and thus is not degraded following stimulation of the NFkB pathway. The sequence is that of IkB-like protein (A238L) from Ornithodoros (relapsing fever ticks).